The chain runs to 235 residues: Ribitol-5-phosphate cytidylyltransferase (235 aa).

Residues 7 to 10, 82 to 88, and Ser-113 contribute to the CTP site; these read LAGG and GADRNTS.

Belongs to the IspD/TarI cytidylyltransferase family. TarI subfamily.

The enzyme catalyses D-ribitol 5-phosphate + CTP + H(+) = CDP-L-ribitol + diphosphate. Its pathway is cell wall biogenesis; poly(ribitol phosphate) teichoic acid biosynthesis. Its function is as follows. Catalyzes the transfer of the cytidylyl group of CTP to D-ribitol 5-phosphate. In Streptococcus pneumoniae (strain ATCC 700669 / Spain 23F-1), this protein is Ribitol-5-phosphate cytidylyltransferase.